A 296-amino-acid chain; its full sequence is Ribonuclease HIII (296 aa).

In terms of domain architecture, RNase H type-2 spans 81–296 (QAMIGTDEVG…TQKAKQLLER (216 aa)). A divalent metal cation is bound by residues Asp-87, Glu-88, and Asp-190.

This sequence belongs to the RNase HII family. RnhC subfamily. It depends on Mn(2+) as a cofactor. Mg(2+) serves as cofactor.

It localises to the cytoplasm. The catalysed reaction is Endonucleolytic cleavage to 5'-phosphomonoester.. Functionally, endonuclease that specifically degrades the RNA of RNA-DNA hybrids. The sequence is that of Ribonuclease HIII from Streptococcus gordonii (strain Challis / ATCC 35105 / BCRC 15272 / CH1 / DL1 / V288).